A 395-amino-acid polypeptide reads, in one-letter code: MTLPVNPVDNLAALIRCPSVTPAEGGALTALEKMLKLMGFSANRPVFSDDNTPDIENLYARKSGNGPHLMFAGHTDVVPPGDEKDWKHPPFAAAIEDGVMYGRGAVDMKGGIACFVAAVARHIEKHGNIKGSISFLITGDEEGPAVNGTVKLLEWAKQRGESWDASIVGEPTNPNALGDMIKIGRRGSLSGTITVHGVQGHAAYPHLAENPVRGIVTLVDSLLCPAFDEGTANFQASNLEVTTIDVGNKATNVIPNKATASFNIRFNDTWTAESLQAEIISRLERAARDNRLRQGRETPIKYELTWRERPSHVFLTHDEKLIGTLTASVEAVTGKRPELSTSGGTSDARFIKDYCPVVEFGLTGQTMHMVDERVALADLEGLTQIYERFIADFFG.

His74 is a binding site for Zn(2+). The active site involves Asp76. A Zn(2+)-binding site is contributed by Asp107. Glu141 serves as the catalytic Proton acceptor. Zn(2+) is bound by residues Glu142, Glu170, and His368.

The protein belongs to the peptidase M20A family. DapE subfamily. In terms of assembly, homodimer. The cofactor is Zn(2+). Co(2+) serves as cofactor.

The catalysed reaction is N-succinyl-(2S,6S)-2,6-diaminopimelate + H2O = (2S,6S)-2,6-diaminopimelate + succinate. The protein operates within amino-acid biosynthesis; L-lysine biosynthesis via DAP pathway; LL-2,6-diaminopimelate from (S)-tetrahydrodipicolinate (succinylase route): step 3/3. Its function is as follows. Catalyzes the hydrolysis of N-succinyl-L,L-diaminopimelic acid (SDAP), forming succinate and LL-2,6-diaminopimelate (DAP), an intermediate involved in the bacterial biosynthesis of lysine and meso-diaminopimelic acid, an essential component of bacterial cell walls. In Brucella melitensis biotype 1 (strain ATCC 23456 / CCUG 17765 / NCTC 10094 / 16M), this protein is Succinyl-diaminopimelate desuccinylase.